The chain runs to 452 residues: Bifunctional protein GlmU (452 aa).

Positions 1-232 are pyrophosphorylase; the sequence is MTGRSCLTIV…EDEVRGINTK (232 aa). Residues 11–14, Lys25, Gln78, and 83–84 each bind UDP-N-acetyl-alpha-D-glucosamine; these read LAAG and GT. Asp108 is a Mg(2+) binding site. Gly144, Glu158, Asn173, and Asn230 together coordinate UDP-N-acetyl-alpha-D-glucosamine. Asn230 serves as a coordination point for Mg(2+). The linker stretch occupies residues 233-253; the sequence is AQLAEAEQVMQARLRKEALDA. Residues 254–452 form an N-acetyltransferase region; it reads GVTMVAPDTV…KLLAKKPKTG (199 aa). Residues Arg319 and Lys337 each coordinate UDP-N-acetyl-alpha-D-glucosamine. His349 (proton acceptor) is an active-site residue. The UDP-N-acetyl-alpha-D-glucosamine site is built by Tyr352 and Asn363. Acetyl-CoA contacts are provided by residues Ala366, 372-373, Ser391, Ser409, and Arg426; that span reads NY.

It in the N-terminal section; belongs to the N-acetylglucosamine-1-phosphate uridyltransferase family. In the C-terminal section; belongs to the transferase hexapeptide repeat family. In terms of assembly, homotrimer. Mg(2+) is required as a cofactor.

It is found in the cytoplasm. The catalysed reaction is alpha-D-glucosamine 1-phosphate + acetyl-CoA = N-acetyl-alpha-D-glucosamine 1-phosphate + CoA + H(+). It catalyses the reaction N-acetyl-alpha-D-glucosamine 1-phosphate + UTP + H(+) = UDP-N-acetyl-alpha-D-glucosamine + diphosphate. The protein operates within nucleotide-sugar biosynthesis; UDP-N-acetyl-alpha-D-glucosamine biosynthesis; N-acetyl-alpha-D-glucosamine 1-phosphate from alpha-D-glucosamine 6-phosphate (route II): step 2/2. It functions in the pathway nucleotide-sugar biosynthesis; UDP-N-acetyl-alpha-D-glucosamine biosynthesis; UDP-N-acetyl-alpha-D-glucosamine from N-acetyl-alpha-D-glucosamine 1-phosphate: step 1/1. It participates in bacterial outer membrane biogenesis; LPS lipid A biosynthesis. Functionally, catalyzes the last two sequential reactions in the de novo biosynthetic pathway for UDP-N-acetylglucosamine (UDP-GlcNAc). The C-terminal domain catalyzes the transfer of acetyl group from acetyl coenzyme A to glucosamine-1-phosphate (GlcN-1-P) to produce N-acetylglucosamine-1-phosphate (GlcNAc-1-P), which is converted into UDP-GlcNAc by the transfer of uridine 5-monophosphate (from uridine 5-triphosphate), a reaction catalyzed by the N-terminal domain. The sequence is that of Bifunctional protein GlmU from Nitrobacter hamburgensis (strain DSM 10229 / NCIMB 13809 / X14).